The following is a 109-amino-acid chain: Nucleoid-associated protein Psyc_0793 (109 aa).

The protein belongs to the YbaB/EbfC family. In terms of assembly, homodimer.

It is found in the cytoplasm. The protein resides in the nucleoid. Binds to DNA and alters its conformation. May be involved in regulation of gene expression, nucleoid organization and DNA protection. The chain is Nucleoid-associated protein Psyc_0793 from Psychrobacter arcticus (strain DSM 17307 / VKM B-2377 / 273-4).